The sequence spans 562 residues: Dihydroxy-acid dehydratase (562 aa).

Cys53 provides a ligand contact to [2Fe-2S] cluster. Asp85 is a Mg(2+) binding site. Residue Cys126 coordinates [2Fe-2S] cluster. Positions 127 and 128 each coordinate Mg(2+). At Lys128 the chain carries N6-carboxylysine. Cys198 is a binding site for [2Fe-2S] cluster. Glu449 lines the Mg(2+) pocket. Ser475 (proton acceptor) is an active-site residue.

The protein belongs to the IlvD/Edd family. In terms of assembly, homodimer. [2Fe-2S] cluster serves as cofactor. The cofactor is Mg(2+).

It catalyses the reaction (2R)-2,3-dihydroxy-3-methylbutanoate = 3-methyl-2-oxobutanoate + H2O. It carries out the reaction (2R,3R)-2,3-dihydroxy-3-methylpentanoate = (S)-3-methyl-2-oxopentanoate + H2O. Its pathway is amino-acid biosynthesis; L-isoleucine biosynthesis; L-isoleucine from 2-oxobutanoate: step 3/4. It functions in the pathway amino-acid biosynthesis; L-valine biosynthesis; L-valine from pyruvate: step 3/4. Functionally, functions in the biosynthesis of branched-chain amino acids. Catalyzes the dehydration of (2R,3R)-2,3-dihydroxy-3-methylpentanoate (2,3-dihydroxy-3-methylvalerate) into 2-oxo-3-methylpentanoate (2-oxo-3-methylvalerate) and of (2R)-2,3-dihydroxy-3-methylbutanoate (2,3-dihydroxyisovalerate) into 2-oxo-3-methylbutanoate (2-oxoisovalerate), the penultimate precursor to L-isoleucine and L-valine, respectively. The protein is Dihydroxy-acid dehydratase of Methylococcus capsulatus (strain ATCC 33009 / NCIMB 11132 / Bath).